Consider the following 1697-residue polypeptide: Neurexin-3a (1697 aa).

The signal sequence occupies residues 1-23 (MNFFRFPVQLQLLISTVLGPCLG). The 175-residue stretch at 24-198 (LEFTGLQGQW…RVRMDIEGIC (175 aa)) folds into the Laminin G-like 1 domain. Residues 24–1622 (LEFTGLQGQW…EVVRESSSTT (1599 aa)) lie on the Extracellular side of the membrane. The EGF-like 1 domain occupies 194-231 (IEGICMENPCENGGTCSVVDGEPLCDCSKTEYVGRFCN). Cystine bridges form between C198–C209, C203–C218, and C220–C230. 2 consecutive Laminin G-like domains span residues 258-455 (VATF…VFKC) and 462-654 (DPIS…KPSC). Positions 304, 321, and 389 each coordinate Ca(2+). Disulfide bonds link C419-C455, C625-C654, C662-C673, C667-C682, and C684-C694. The region spanning 658-695 (SGKQCDSYPCKNKGLCKEGWNRFICDCTGTGYWSRTCE) is the EGF-like 2 domain. 2 consecutive Laminin G-like domains span residues 700–872 (ILSY…IDFC) and 886–1061 (DPVT…ERGC). Cystine bridges form between C1033–C1061, C1077–C1088, C1082–C1097, and C1099–C1109. One can recognise an EGF-like 3 domain in the interval 1073–1110 (PSTTCQEDSCANMGICIQQWENYTCDCSMTSYTGTHCN). One can recognise a Laminin G-like 6 domain in the interval 1114–1314 (TTYIFGKGGG…NPNIKINGSV (201 aa)). Disordered stretches follow at residues 1345 to 1366 (TMSTTTTRKHRTPPTIQTTDDM), 1442 to 1479 (LSDGGSDDCGDDDDDDDDDGLMISGYGSGEAYDSNLPP), and 1520 to 1557 (PNKVFDSGRTTTASFSPKLSRSTTTSTPPKLPAGKMNH). The segment covering 1446–1461 (GSDDCGDDDDDDDDDG) has biased composition (acidic residues). Residues 1527 to 1547 (GRTTTASFSPKLSRSTTTSTP) show a composition bias toward polar residues. Residues 1623-1643 (GMVVGIVAAAALCILILLYAM) form a helical membrane-spanning segment. Residues 1644 to 1697 (YKYRNRDEGSYQVDETRNYITNSAQSNGAVMKDKQQSTKSGNKKQKNKDKEYYV) are Cytoplasmic-facing. Positions 1665–1697 (NSAQSNGAVMKDKQQSTKSGNKKQKNKDKEYYV) are disordered.

Belongs to the neurexin family.

The protein localises to the membrane. Its function is as follows. Neuronal cell surface protein that may be involved in cell recognition and cell adhesion. This chain is Neurexin-3a (nrxn3a), found in Danio rerio (Zebrafish).